The following is a 71-amino-acid chain: Delta-actitoxin-Avd2b 4 (71 aa).

Residues 1–20 (MMNRLLVFLMLGAFMLVVSA) form the signal peptide. Positions 21–41 (NDAYGDEPAFKDLNQGDESLG) are excised as a propeptide. 3 cysteine pairs are disulfide-bonded: cysteine 46–cysteine 61, cysteine 47–cysteine 55, and cysteine 49–cysteine 66.

Belongs to the sea anemone short toxin (type III) family.

The protein resides in the secreted. Its subcellular location is the nematocyst. Its function is as follows. Voltage-gated sodium channel (Nav) inhibitor. 1 uM completely inhibits insect voltage-gated sodium channel inactivation (DmNav1 from D.melanogaster). The protein is Delta-actitoxin-Avd2b 4 of Anemonia viridis (Snakelocks anemone).